A 598-amino-acid chain; its full sequence is uncharacterized protein (598 aa).

Low complexity predominate over residues 1–19; the sequence is MSVPLRFSTPSSSPSASDN. Disordered regions lie at residues 1–54, 139–176, and 194–279; these read MSVP…MRPK, QKNQEARSRANSRVNSRANSRANSSVSLAGMDGSPNWK, and EAQL…ITMP. Residues 1–313 are Cytoplasmic-facing; the sequence is MSVPLRFSTP…CKIRHFFREG (313 aa). Residues 30-48 show a composition bias toward polar residues; it reads ELDTFNTTDVPRRVNTTKA. The span at 147-165 shows a compositional bias: low complexity; it reads RANSRVNSRANSRANSSVS. 2 stretches are compositionally biased toward polar residues: residues 218 to 242 and 255 to 276; these read FSLQSSRQPSIAEEQPQTQRKSSAI and PRNNVSFSRKPSIAEQDSSQDI. A helical membrane pass occupies residues 314 to 334; that stretch reads FAEFLGTLVLVVFGVGSNLQA. Residues 335–346 lie on the Extracellular side of the membrane; sequence TVTNGAGGSFES. A helical transmembrane segment spans residues 347-367; that stretch reads LSFAWGFGCMLGVYIAGGISG. The Cytoplasmic segment spans residues 368–388; that stretch reads GHVNPAVTISLAIFRKFPWYK. Residues 371 to 373 carry the NPA 1 motif; it reads NPA. Residues 389–409 form a helical membrane-spanning segment; sequence VPIYIFFQIWGAFFGGALAYG. Topologically, residues 410 to 444 are extracellular; the sequence is YHWSSITEFEGGKDIRTPATGGCLYTNPKPYVTWR. Residues 445–465 traverse the membrane as a helical segment; sequence NAFFDEFIGTAVLVGCLFAIL. The Cytoplasmic segment spans residues 466-473; sequence DDTNSPPT. The helical transmembrane segment at 474-494 threads the bilayer; that stretch reads QGMTAFIVGLLIAAIGMALGY. Residues 495 to 532 are Extracellular-facing; the sequence is QTSFTLNPARDLGPRMFAWWIGYGPHSFHLYHWWWTWG. The short motif at 501–503 is the NPA 2 element; it reads NPA. Residues 533–553 traverse the membrane as a helical segment; it reads AWGGTIGGGIAGGLIYDLVIF. Over 554-598 the chain is Cytoplasmic; that stretch reads TGPESPLNYPDNGFIDKKVHQITAKFEKEEEVENLEKTDSPIENN.

The protein belongs to the MIP/aquaporin (TC 1.A.8) family.

Its subcellular location is the membrane. This is an uncharacterized protein from Schizosaccharomyces pombe (strain 972 / ATCC 24843) (Fission yeast).